Reading from the N-terminus, the 1047-residue chain is Isoleucine--tRNA ligase (1047 aa).

The short motif at 52–62 (PTANGMPGAHH) is the 'HIGH' region element. A 'KMSKS' region motif is present at residues 600-604 (KMSKH). Lys603 lines the ATP pocket.

Belongs to the class-I aminoacyl-tRNA synthetase family. IleS type 2 subfamily. In terms of assembly, monomer. It depends on Zn(2+) as a cofactor.

The protein resides in the cytoplasm. It catalyses the reaction tRNA(Ile) + L-isoleucine + ATP = L-isoleucyl-tRNA(Ile) + AMP + diphosphate. Catalyzes the attachment of isoleucine to tRNA(Ile). As IleRS can inadvertently accommodate and process structurally similar amino acids such as valine, to avoid such errors it has two additional distinct tRNA(Ile)-dependent editing activities. One activity is designated as 'pretransfer' editing and involves the hydrolysis of activated Val-AMP. The other activity is designated 'posttransfer' editing and involves deacylation of mischarged Val-tRNA(Ile). This is Isoleucine--tRNA ligase from Streptomyces coelicolor (strain ATCC BAA-471 / A3(2) / M145).